Here is a 518-residue protein sequence, read N- to C-terminus: Membrane-bound lytic murein transglycosylase F (518 aa).

Residues 1–21 (MKKLKINYLFIGILALLLAVA) form the signal peptide. A non-LT domain region spans residues 22-269 (LWPSIPWFGK…RIEEKYLGHG (248 aa)). Positions 270–518 (DDFDYVDTRT…SRKGSEEKQN (249 aa)) are LT domain. Glu314 is an active-site residue.

In the N-terminal section; belongs to the bacterial solute-binding protein 3 family. It in the C-terminal section; belongs to the transglycosylase Slt family.

Its subcellular location is the cell outer membrane. It carries out the reaction Exolytic cleavage of the (1-&gt;4)-beta-glycosidic linkage between N-acetylmuramic acid (MurNAc) and N-acetylglucosamine (GlcNAc) residues in peptidoglycan, from either the reducing or the non-reducing ends of the peptidoglycan chains, with concomitant formation of a 1,6-anhydrobond in the MurNAc residue.. Murein-degrading enzyme that degrades murein glycan strands and insoluble, high-molecular weight murein sacculi, with the concomitant formation of a 1,6-anhydromuramoyl product. Lytic transglycosylases (LTs) play an integral role in the metabolism of the peptidoglycan (PG) sacculus. Their lytic action creates space within the PG sacculus to allow for its expansion as well as for the insertion of various structures such as secretion systems and flagella. The sequence is that of Membrane-bound lytic murein transglycosylase F from Shigella boydii serotype 18 (strain CDC 3083-94 / BS512).